Consider the following 95-residue polypeptide: Aspartyl/glutamyl-tRNA(Asn/Gln) amidotransferase subunit C (95 aa).

This sequence belongs to the GatC family. In terms of assembly, heterotrimer of A, B and C subunits.

The catalysed reaction is L-glutamyl-tRNA(Gln) + L-glutamine + ATP + H2O = L-glutaminyl-tRNA(Gln) + L-glutamate + ADP + phosphate + H(+). It carries out the reaction L-aspartyl-tRNA(Asn) + L-glutamine + ATP + H2O = L-asparaginyl-tRNA(Asn) + L-glutamate + ADP + phosphate + 2 H(+). In terms of biological role, allows the formation of correctly charged Asn-tRNA(Asn) or Gln-tRNA(Gln) through the transamidation of misacylated Asp-tRNA(Asn) or Glu-tRNA(Gln) in organisms which lack either or both of asparaginyl-tRNA or glutaminyl-tRNA synthetases. The reaction takes place in the presence of glutamine and ATP through an activated phospho-Asp-tRNA(Asn) or phospho-Glu-tRNA(Gln). This is Aspartyl/glutamyl-tRNA(Asn/Gln) amidotransferase subunit C from Vesicomyosocius okutanii subsp. Calyptogena okutanii (strain HA).